A 554-amino-acid polypeptide reads, in one-letter code: Trichloroethene reductive dehalogenase (554 aa).

Positions methionine 1–phenylalanine 42 form a signal peptide, tat-type signal. 4Fe-4S ferredoxin-type domains lie at proline 425–proline 457 and glutamate 471–tryptophan 500. Cysteine 437, cysteine 440, cysteine 443, cysteine 447, cysteine 480, cysteine 483, cysteine 486, and cysteine 490 together coordinate [4Fe-4S] cluster.

Belongs to the PceA family. [4Fe-4S] cluster is required as a cofactor. Requires corrinoid as cofactor. Predicted to be exported by the Tat system. The position of the signal peptide cleavage has been experimentally proven.

Its subcellular location is the cell membrane. It catalyses the reaction trichloroethene + AH2 = (Z)-1,2-dichloroethene + chloride + A + H(+). It carries out the reaction (Z)-1,2-dichloroethene + AH2 = chloroethene + chloride + A + H(+). The enzyme catalyses 1,1-dichloroethene + AH2 = chloroethene + chloride + A + H(+). Loses 93% of its activity upon incubation with 1-iodopropane and titanium(III) citrate in the dark. Subsequent exposure to light restores 80% of the original activity. Completely inhibited by 2 mM sodium sulfite or sodium dithionite, and by 1 mM cuprous chloride. Its function is as follows. Catalyzes the reductive dechlorination of trichloroethene (TCE) to cis-1,2-dichloroethene (DCE) and of cis-1,2-dichloroethene to chloroethene. The substrate specificity is broad, and the enzyme can dehalogenate various substrates, including 1,1-dichloroethene (1,1-DCE), 1,2-dichloroethane and 1,2-dibromoethane. A variety of other haloalkanes and haloalkenes containing three to five carbon atoms are dehalogenated at lower rates. Trans-1,2-dichloroethene (trans-DCE) and chloroethene are degraded at rates which are approximately 2 orders of magnitude lower. Titanium(III) citrate and methyl viologen can be used as reductants. In Dehalococcoides mccartyi (strain ATCC BAA-2266 / KCTC 15142 / 195) (Dehalococcoides ethenogenes (strain 195)), this protein is Trichloroethene reductive dehalogenase.